A 393-amino-acid polypeptide reads, in one-letter code: Tryptophan synthase beta chain (393 aa).

K85 carries the post-translational modification N6-(pyridoxal phosphate)lysine.

The protein belongs to the TrpB family. As to quaternary structure, tetramer of two alpha and two beta chains. Requires pyridoxal 5'-phosphate as cofactor.

The enzyme catalyses (1S,2R)-1-C-(indol-3-yl)glycerol 3-phosphate + L-serine = D-glyceraldehyde 3-phosphate + L-tryptophan + H2O. Its pathway is amino-acid biosynthesis; L-tryptophan biosynthesis; L-tryptophan from chorismate: step 5/5. Its function is as follows. The beta subunit is responsible for the synthesis of L-tryptophan from indole and L-serine. This is Tryptophan synthase beta chain (trpB) from Helicobacter pylori (strain J99 / ATCC 700824) (Campylobacter pylori J99).